A 593-amino-acid chain; its full sequence is Methionine--tRNA ligase, mitochondrial (593 aa).

The N-terminal 29 residues, 1–29 (MLRTSVLRLLGRTGASRLSLLEDFGPRYY), are a transit peptide targeting the mitochondrion. Residues 52-62 (FYVNAAPHIGH) carry the 'HIGH' region motif. The 'KMSKS' region motif lies at 347–351 (KMSKS). K350 contributes to the ATP binding site.

This sequence belongs to the class-I aminoacyl-tRNA synthetase family.

Its subcellular location is the mitochondrion matrix. The enzyme catalyses tRNA(Met) + L-methionine + ATP = L-methionyl-tRNA(Met) + AMP + diphosphate. This Homo sapiens (Human) protein is Methionine--tRNA ligase, mitochondrial (MARS2).